The following is a 1171-amino-acid chain: WD repeat-containing protein on Y chromosome (1171 aa).

WD repeat units follow at residues 157 to 201 (EIPE…LRSA), 331 to 370 (RIPL…EPSA), 374 to 413 (GHNG…LLQT), 464 to 503 (THAA…RKII), 516 to 555 (IIDI…VVRN), 603 to 643 (FHTD…RRYN), 748 to 787 (KVGD…IPQA), and 831 to 870 (GHLK…LGTL). Residues 1076–1171 (RTSFTLSDYT…TNTMKSSNSH (96 aa)) form a disordered region. Polar residues-rich tracts occupy residues 1094-1106 (SSRN…SSGS) and 1161-1171 (KTNTMKSSNSH).

This chain is WD repeat-containing protein on Y chromosome, found in Drosophila grimshawi (Hawaiian fruit fly).